Here is a 356-residue protein sequence, read N- to C-terminus: DNA integrity scanning protein DisA (356 aa).

In terms of domain architecture, DAC spans 7–147 (NKNMLYALKM…EKYVVEDISK (141 aa)). ATP-binding positions include Gly-74, Leu-92, and 105–109 (TRHRT).

This sequence belongs to the DisA family. Homooctamer. Mg(2+) serves as cofactor.

It carries out the reaction 2 ATP = 3',3'-c-di-AMP + 2 diphosphate. In terms of biological role, participates in a DNA-damage check-point that is active prior to asymmetric division when DNA is damaged. DisA forms globular foci that rapidly scan along the chromosomes during sporulation, searching for lesions. When a lesion is present, DisA pauses at the lesion site. This triggers a cellular response that culminates in a temporary block in sporulation initiation. Functionally, also has diadenylate cyclase activity, catalyzing the condensation of 2 ATP molecules into cyclic di-AMP (c-di-AMP). c-di-AMP acts as a signaling molecule that couples DNA integrity with progression of sporulation. The rise in c-di-AMP level generated by DisA while scanning the chromosome, operates as a positive signal that advances sporulation; upon encountering a lesion, the DisA focus arrests at the damaged site and halts c-di-AMP synthesis. In Clostridioides difficile (strain 630) (Peptoclostridium difficile), this protein is DNA integrity scanning protein DisA.